The chain runs to 150 residues: Deoxyuridine 5'-triphosphate nucleotidohydrolase (150 aa).

Substrate contacts are provided by residues 69–71 (RSG), Asn-82, 86–88 (LID), and Met-96.

This sequence belongs to the dUTPase family. It depends on Mg(2+) as a cofactor.

It carries out the reaction dUTP + H2O = dUMP + diphosphate + H(+). The protein operates within pyrimidine metabolism; dUMP biosynthesis; dUMP from dCTP (dUTP route): step 2/2. Its function is as follows. This enzyme is involved in nucleotide metabolism: it produces dUMP, the immediate precursor of thymidine nucleotides and it decreases the intracellular concentration of dUTP so that uracil cannot be incorporated into DNA. This is Deoxyuridine 5'-triphosphate nucleotidohydrolase from Acinetobacter baumannii (strain AB307-0294).